The chain runs to 188 residues: Elongation factor P (188 aa).

Residue Lys34 is modified to N6-(3,6-diaminohexanoyl)-5-hydroxylysine.

The protein belongs to the elongation factor P family. May be beta-lysylated on the epsilon-amino group of Lys-34 by the combined action of EpmA and EpmB, and then hydroxylated on the C5 position of the same residue by EpmC (if this protein is present). Lysylation is critical for the stimulatory effect of EF-P on peptide-bond formation. The lysylation moiety may extend toward the peptidyltransferase center and stabilize the terminal 3-CCA end of the tRNA. Hydroxylation of the C5 position on Lys-34 may allow additional potential stabilizing hydrogen-bond interactions with the P-tRNA.

Its subcellular location is the cytoplasm. The protein operates within protein biosynthesis; polypeptide chain elongation. Functionally, involved in peptide bond synthesis. Alleviates ribosome stalling that occurs when 3 or more consecutive Pro residues or the sequence PPG is present in a protein, possibly by augmenting the peptidyl transferase activity of the ribosome. Modification of Lys-34 is required for alleviation. The sequence is that of Elongation factor P from Coxiella burnetii (strain CbuG_Q212) (Coxiella burnetii (strain Q212)).